Here is a 127-residue protein sequence, read N- to C-terminus: Glycine cleavage system H protein (127 aa).

A Lipoyl-binding domain is found at 24–105; it reads TAVVGITDFA…YNEGWIVKMK (82 aa). Lysine 65 bears the N6-lipoyllysine mark.

This sequence belongs to the GcvH family. In terms of assembly, the glycine cleavage system is composed of four proteins: P, T, L and H. (R)-lipoate is required as a cofactor.

Its function is as follows. The glycine cleavage system catalyzes the degradation of glycine. The H protein shuttles the methylamine group of glycine from the P protein to the T protein. This chain is Glycine cleavage system H protein, found in Chlorobaculum parvum (strain DSM 263 / NCIMB 8327) (Chlorobium vibrioforme subsp. thiosulfatophilum).